A 373-amino-acid polypeptide reads, in one-letter code: Chaperone protein DnaJ (373 aa).

The region spanning 4–68 (NYYQILGVSK…QKRAAYDRLG (65 aa)) is the J domain. A CR-type zinc finger spans residues 136–214 (GIEKNISFSS…CHGMGRYHKQ (79 aa)). Zn(2+) is bound by residues Cys149, Cys152, Cys166, Cys169, Cys188, Cys191, Cys202, and Cys205. CXXCXGXG motif repeat units lie at residues 149–156 (CDTCHGSG), 166–173 (CDACSGVG), 188–195 (CHKCQGNG), and 202–209 (CKKCHGMG).

This sequence belongs to the DnaJ family. Homodimer. Zn(2+) serves as cofactor.

The protein resides in the cytoplasm. Functionally, participates actively in the response to hyperosmotic and heat shock by preventing the aggregation of stress-denatured proteins and by disaggregating proteins, also in an autonomous, DnaK-independent fashion. Unfolded proteins bind initially to DnaJ; upon interaction with the DnaJ-bound protein, DnaK hydrolyzes its bound ATP, resulting in the formation of a stable complex. GrpE releases ADP from DnaK; ATP binding to DnaK triggers the release of the substrate protein, thus completing the reaction cycle. Several rounds of ATP-dependent interactions between DnaJ, DnaK and GrpE are required for fully efficient folding. Also involved, together with DnaK and GrpE, in the DNA replication of plasmids through activation of initiation proteins. The polypeptide is Chaperone protein DnaJ (Rickettsia africae (strain ESF-5)).